Consider the following 337-residue polypeptide: Protein hairy (337 aa).

An interaction with Topors region spans residues 29–48 (KSDRRSNKPIMEKRRRARIN). Residues 31 to 88 (DRRSNKPIMEKRRRARINNCLNELKTLILDATKKDPARHSKLEKADILEKTVKHLQEL) form the bHLH domain. The region spanning 107-136 (FKAGFADCVNEVSRFPGIEPAQRRRLLQHL) is the Orange domain. Disordered regions lie at residues 146–178 (ELHQ…SQQG) and 259–311 (MPQR…VIQR). Low complexity predominate over residues 263-301 (TASTGSASSHSSAGYESAPGSSSSCSYAPPSPANSSYEP). The short motif at 334–337 (WRPW) is the WRPW motif element.

As to quaternary structure, transcription repression requires formation of a complex with a corepressor protein (Groucho). Interacts with gro (via WPRW motif) and Topors. Post-translationally, ubiquitinated by Topors.

The protein resides in the nucleus. Functionally, pair-rule protein that regulates embryonic segmentation and adult bristle patterning. Transcriptional repressor of genes that require a bHLH protein for their transcription (e.g. ftz). The chain is Protein hairy from Drosophila melanogaster (Fruit fly).